Here is a 342-residue protein sequence, read N- to C-terminus: tRNA N6-adenosine threonylcarbamoyltransferase (342 aa).

Residues H114 and H118 each coordinate Fe cation. Substrate is bound by residues 136 to 140, D169, G182, D186, and N275; that span reads LVSGG. Position 301 (D301) interacts with Fe cation.

It belongs to the KAE1 / TsaD family. It depends on Fe(2+) as a cofactor.

It localises to the cytoplasm. It carries out the reaction L-threonylcarbamoyladenylate + adenosine(37) in tRNA = N(6)-L-threonylcarbamoyladenosine(37) in tRNA + AMP + H(+). Its function is as follows. Required for the formation of a threonylcarbamoyl group on adenosine at position 37 (t(6)A37) in tRNAs that read codons beginning with adenine. Is involved in the transfer of the threonylcarbamoyl moiety of threonylcarbamoyl-AMP (TC-AMP) to the N6 group of A37, together with TsaE and TsaB. TsaD likely plays a direct catalytic role in this reaction. This Streptococcus pyogenes serotype M4 (strain MGAS10750) protein is tRNA N6-adenosine threonylcarbamoyltransferase.